A 914-amino-acid chain; its full sequence is Valine--tRNA ligase (914 aa).

A 'HIGH' region motif is present at residues P45–H55. Positions K538–S542 match the 'KMSKS' region motif. An ATP-binding site is contributed by K541. Residues L847 to S914 are a coiled coil.

It belongs to the class-I aminoacyl-tRNA synthetase family. ValS type 1 subfamily. In terms of assembly, monomer.

Its subcellular location is the cytoplasm. It catalyses the reaction tRNA(Val) + L-valine + ATP = L-valyl-tRNA(Val) + AMP + diphosphate. Catalyzes the attachment of valine to tRNA(Val). As ValRS can inadvertently accommodate and process structurally similar amino acids such as threonine, to avoid such errors, it has a 'posttransfer' editing activity that hydrolyzes mischarged Thr-tRNA(Val) in a tRNA-dependent manner. This chain is Valine--tRNA ligase, found in Parasynechococcus marenigrum (strain WH8102).